A 249-amino-acid chain; its full sequence is 2,3-bisphosphoglycerate-dependent phosphoglycerate mutase (249 aa).

Substrate contacts are provided by residues 9–16 (RHGQSQWN), 22–23 (TG), Arg61, 88–91 (ERHY), Lys99, 115–116 (RR), and 184–185 (GN). The Tele-phosphohistidine intermediate role is filled by His10. The Proton donor/acceptor role is filled by Glu88.

The protein belongs to the phosphoglycerate mutase family. BPG-dependent PGAM subfamily. Homodimer.

The catalysed reaction is (2R)-2-phosphoglycerate = (2R)-3-phosphoglycerate. Its pathway is carbohydrate degradation; glycolysis; pyruvate from D-glyceraldehyde 3-phosphate: step 3/5. Functionally, catalyzes the interconversion of 2-phosphoglycerate and 3-phosphoglycerate. This Xanthomonas campestris pv. campestris (strain 8004) protein is 2,3-bisphosphoglycerate-dependent phosphoglycerate mutase.